Here is a 449-residue protein sequence, read N- to C-terminus: Protein CapK (449 aa).

It functions in the pathway capsule biogenesis; capsule polysaccharide biosynthesis. Required for the biosynthesis of type 1 capsular polysaccharide. This Staphylococcus aureus protein is Protein CapK (capK).